Here is a 195-residue protein sequence, read N- to C-terminus: UPF0215 protein TSIB_1161 (195 aa).

This sequence belongs to the UPF0215 family.

The sequence is that of UPF0215 protein TSIB_1161 from Thermococcus sibiricus (strain DSM 12597 / MM 739).